The primary structure comprises 347 residues: Bifunctional methylenetetrahydrofolate dehydrogenase/cyclohydrolase 2, mitochondrial (347 aa).

Substrate-binding positions include 98 to 102 and 145 to 147; these read YVRNK and VQL. NAD(+) is bound by residues 214 to 216 and Arg247; that span reads GRS. 323-327 contacts substrate; the sequence is PGGVG.

Belongs to the tetrahydrofolate dehydrogenase/cyclohydrolase family. The cofactor is Mg(2+).

The protein localises to the mitochondrion inner membrane. It catalyses the reaction (6R)-5,10-methylene-5,6,7,8-tetrahydrofolate + NAD(+) = (6R)-5,10-methenyltetrahydrofolate + NADH. The enzyme catalyses (6R)-5,10-methenyltetrahydrofolate + H2O = (6R)-10-formyltetrahydrofolate + H(+). The catalysed reaction is (6R)-5,10-methylene-5,6,7,8-tetrahydrofolate + NADP(+) = (6R)-5,10-methenyltetrahydrofolate + NADPH. Its pathway is one-carbon metabolism; tetrahydrofolate interconversion. Functionally, bifunctional mitochondrial folate-interconverting enzyme that has both NAD/NADP-dependent methylenetetrahydrofolate dehydrogenase and methenyltetrahydrofolate cyclohydrolase activities. The chain is Bifunctional methylenetetrahydrofolate dehydrogenase/cyclohydrolase 2, mitochondrial from Callithrix jacchus (White-tufted-ear marmoset).